A 305-amino-acid polypeptide reads, in one-letter code: MTAVLPLPHPLADPAPRDPRQRLQREQLRLGKRLQRQVGQAIADFGMISPGDKIMVCLSGGKDSYTMLDMLLQLQRKAPVPFTLVAVNLDQKQPDFPAHVLPAYLDALGVPFDIVEQDTYSVVSRVVPAGKTMCSLCSRLRRGALYAYAQTHGVTKIALGHHRDDIVATFFMNLFHHARLAAMAPKLRSDDGAHVVIRPLAYVREAHIAAYAQARQFPIIPCNLCGSQENLQRQQVGKMLQHWDHEQPGRVEQIARALGDVRPEQLADRTLFDFLALGRSGDAPPDLAPDPGAWLTASDATHDSD.

Positions 1-20 (MTAVLPLPHPLADPAPRDPR) are disordered. Positions 59-64 (SGGKDS) match the PP-loop motif motif. [4Fe-4S] cluster is bound by residues Cys134, Cys137, and Cys225. Residues 282-293 (DAPPDLAPDPGA) are compositionally biased toward low complexity. Positions 282-305 (DAPPDLAPDPGAWLTASDATHDSD) are disordered.

It belongs to the TtcA family. As to quaternary structure, homodimer. The cofactor is Mg(2+). Requires [4Fe-4S] cluster as cofactor.

It is found in the cytoplasm. The enzyme catalyses cytidine(32) in tRNA + S-sulfanyl-L-cysteinyl-[cysteine desulfurase] + AH2 + ATP = 2-thiocytidine(32) in tRNA + L-cysteinyl-[cysteine desulfurase] + A + AMP + diphosphate + H(+). It participates in tRNA modification. Its function is as follows. Catalyzes the ATP-dependent 2-thiolation of cytidine in position 32 of tRNA, to form 2-thiocytidine (s(2)C32). The sulfur atoms are provided by the cysteine/cysteine desulfurase (IscS) system. The sequence is that of tRNA-cytidine(32) 2-sulfurtransferase from Xanthomonas oryzae pv. oryzae (strain MAFF 311018).